Consider the following 336-residue polypeptide: Tetraacyldisaccharide 4'-kinase (336 aa).

60–67 (TIGGTGKT) contacts ATP.

The protein belongs to the LpxK family.

The catalysed reaction is a lipid A disaccharide + ATP = a lipid IVA + ADP + H(+). Its pathway is glycolipid biosynthesis; lipid IV(A) biosynthesis; lipid IV(A) from (3R)-3-hydroxytetradecanoyl-[acyl-carrier-protein] and UDP-N-acetyl-alpha-D-glucosamine: step 6/6. Transfers the gamma-phosphate of ATP to the 4'-position of a tetraacyldisaccharide 1-phosphate intermediate (termed DS-1-P) to form tetraacyldisaccharide 1,4'-bis-phosphate (lipid IVA). In Pseudomonas putida (strain W619), this protein is Tetraacyldisaccharide 4'-kinase.